A 227-amino-acid chain; its full sequence is Large ribosomal subunit protein bL25 (227 aa).

It belongs to the bacterial ribosomal protein bL25 family. CTC subfamily. In terms of assembly, part of the 50S ribosomal subunit; part of the 5S rRNA/L5/L18/L25 subcomplex. Contacts the 5S rRNA. Binds to the 5S rRNA independently of L5 and L18.

In terms of biological role, this is one of the proteins that binds to the 5S RNA in the ribosome where it forms part of the central protuberance. This chain is Large ribosomal subunit protein bL25, found in Polaromonas sp. (strain JS666 / ATCC BAA-500).